The sequence spans 276 residues: Large ribosomal subunit protein uL2 (276 aa).

A disordered region spans residues 221–276 (RGSAMNPNDHPHGGGEGRAPIGRKSPMTPWGKKARGVKTRDRKKASNALIIRRRTK). Positions 252 to 276 (KKARGVKTRDRKKASNALIIRRRTK) are enriched in basic residues.

The protein belongs to the universal ribosomal protein uL2 family. Part of the 50S ribosomal subunit. Forms a bridge to the 30S subunit in the 70S ribosome.

Functionally, one of the primary rRNA binding proteins. Required for association of the 30S and 50S subunits to form the 70S ribosome, for tRNA binding and peptide bond formation. It has been suggested to have peptidyltransferase activity; this is somewhat controversial. Makes several contacts with the 16S rRNA in the 70S ribosome. This Aster yellows phytoplasma protein is Large ribosomal subunit protein uL2.